The primary structure comprises 267 residues: uncharacterized protein (267 aa).

Belongs to the glycosyltransferase 2 family.

This is an uncharacterized protein from Haemophilus influenzae (strain ATCC 51907 / DSM 11121 / KW20 / Rd).